A 481-amino-acid chain; its full sequence is Argininosuccinate lyase (481 aa).

This sequence belongs to the lyase 1 family. Argininosuccinate lyase subfamily.

It is found in the cytoplasm. It catalyses the reaction 2-(N(omega)-L-arginino)succinate = fumarate + L-arginine. It functions in the pathway amino-acid biosynthesis; L-arginine biosynthesis; L-arginine from L-ornithine and carbamoyl phosphate: step 3/3. This chain is Argininosuccinate lyase, found in Methanococcus vannielii (strain ATCC 35089 / DSM 1224 / JCM 13029 / OCM 148 / SB).